Consider the following 215-residue polypeptide: Adenylate kinase (215 aa).

Residue 10–15 participates in ATP binding; that stretch reads GAGKGT. Residues 30–59 form an NMP region; it reads STGDIFRKNISENTPLGMEARSYMDKGLLV. AMP is bound by residues Thr-31, Arg-36, 57 to 59, 85 to 88, and Gln-92; these read LLV and GFPR. The tract at residues 126–163 is LID; it reads GRRVCTSCGGSFHIKFNPPTIDGKCNLCGSDIVQRKDD. Arg-127 is a binding site for ATP. Zn(2+) is bound by residues Cys-130 and Cys-133. 136 to 137 contributes to the ATP binding site; the sequence is SF. Zn(2+) is bound by residues Cys-150 and Cys-153. AMP is bound by residues Arg-160 and Arg-171. Lys-199 serves as a coordination point for ATP.

Belongs to the adenylate kinase family. Monomer.

It is found in the cytoplasm. The catalysed reaction is AMP + ATP = 2 ADP. It participates in purine metabolism; AMP biosynthesis via salvage pathway; AMP from ADP: step 1/1. Functionally, catalyzes the reversible transfer of the terminal phosphate group between ATP and AMP. Plays an important role in cellular energy homeostasis and in adenine nucleotide metabolism. The polypeptide is Adenylate kinase (Clostridium botulinum (strain Eklund 17B / Type B)).